The following is a 569-amino-acid chain: Proline--tRNA ligase (569 aa).

The protein belongs to the class-II aminoacyl-tRNA synthetase family. ProS type 1 subfamily. In terms of assembly, homodimer.

The protein resides in the cytoplasm. The enzyme catalyses tRNA(Pro) + L-proline + ATP = L-prolyl-tRNA(Pro) + AMP + diphosphate. In terms of biological role, catalyzes the attachment of proline to tRNA(Pro) in a two-step reaction: proline is first activated by ATP to form Pro-AMP and then transferred to the acceptor end of tRNA(Pro). As ProRS can inadvertently accommodate and process non-cognate amino acids such as alanine and cysteine, to avoid such errors it has two additional distinct editing activities against alanine. One activity is designated as 'pretransfer' editing and involves the tRNA(Pro)-independent hydrolysis of activated Ala-AMP. The other activity is designated 'posttransfer' editing and involves deacylation of mischarged Ala-tRNA(Pro). The misacylated Cys-tRNA(Pro) is not edited by ProRS. The polypeptide is Proline--tRNA ligase (Shewanella woodyi (strain ATCC 51908 / MS32)).